The chain runs to 196 residues: GTP cyclohydrolase 1 (196 aa).

Cys86, His89, and Cys158 together coordinate Zn(2+).

The protein belongs to the GTP cyclohydrolase I family. Toroid-shaped homodecamer, composed of two pentamers of five dimers.

The enzyme catalyses GTP + H2O = 7,8-dihydroneopterin 3'-triphosphate + formate + H(+). It participates in cofactor biosynthesis; 7,8-dihydroneopterin triphosphate biosynthesis; 7,8-dihydroneopterin triphosphate from GTP: step 1/1. The sequence is that of GTP cyclohydrolase 1 from Clostridium botulinum (strain ATCC 19397 / Type A).